Reading from the N-terminus, the 256-residue chain is MKKDVLTLGGHEFSSRFILGSGKYNLNLIKAAVENAGAQMITLALRRANTSGGENILDFIPEGVTLLPNTSGARNAEEAVRIARLARAMNCGDFVKVEIIHDSKYLLPDNYETIKATEILAKEGFIVMPYMHADLNVARDLVNAGAACIMPLASPIGSNKGLATKEFIKILVDEIDLPIIVDAGIGRPSQACEAMEMGVAAVMANTAIATAGDIPAMAGAFKQAIEAGRAAYLSGLGRVLDKGASASSPLTGFLED.

Residue lysine 96 is the Schiff-base intermediate with DXP of the active site. 1-deoxy-D-xylulose 5-phosphate-binding positions include glycine 157, 183-184, and 205-206; these read AG and NT.

It belongs to the ThiG family. As to quaternary structure, homotetramer. Forms heterodimers with either ThiH or ThiS.

The protein localises to the cytoplasm. It carries out the reaction [ThiS sulfur-carrier protein]-C-terminal-Gly-aminoethanethioate + 2-iminoacetate + 1-deoxy-D-xylulose 5-phosphate = [ThiS sulfur-carrier protein]-C-terminal Gly-Gly + 2-[(2R,5Z)-2-carboxy-4-methylthiazol-5(2H)-ylidene]ethyl phosphate + 2 H2O + H(+). It participates in cofactor biosynthesis; thiamine diphosphate biosynthesis. In terms of biological role, catalyzes the rearrangement of 1-deoxy-D-xylulose 5-phosphate (DXP) to produce the thiazole phosphate moiety of thiamine. Sulfur is provided by the thiocarboxylate moiety of the carrier protein ThiS. In vitro, sulfur can be provided by H(2)S. In Clostridium beijerinckii (strain ATCC 51743 / NCIMB 8052) (Clostridium acetobutylicum), this protein is Thiazole synthase.